A 249-amino-acid chain; its full sequence is Exosome complex component Rrp4 (249 aa).

One can recognise an S1 motif domain in the interval 72–143 (GDTIIGLVED…RTISPVLTVK (72 aa)). A KH domain is found at 151–213 (PLGTVMDIMP…EALIEAINII (63 aa)).

This sequence belongs to the RRP4 family. As to quaternary structure, component of the archaeal exosome complex. Forms a trimer of Rrp4 and/or Csl4 subunits. The trimer associates with a hexameric ring-like arrangement composed of 3 Rrp41-Rrp42 heterodimers.

Its subcellular location is the cytoplasm. Non-catalytic component of the exosome, which is a complex involved in RNA degradation. Increases the RNA binding and the efficiency of RNA degradation. Confers strong poly(A) specificity to the exosome. This chain is Exosome complex component Rrp4, found in Sulfolobus acidocaldarius (strain ATCC 33909 / DSM 639 / JCM 8929 / NBRC 15157 / NCIMB 11770).